The chain runs to 241 residues: Tumor necrosis factor ligand superfamily member 13 (241 aa).

Residues 1-95 constitute a propeptide that is removed on maturation; that stretch reads MPASSPGHMG…KDGAKSRRRR (95 aa). Positions 107 to 241 constitute a THD domain; it reads SVLHLVPVNI…HGTFLGFVKL (135 aa). N-linked (GlcNAc...) asparagine glycosylation is present at N115. C187 and C202 are joined by a disulfide.

It belongs to the tumor necrosis factor family. In terms of assembly, homotrimer. In terms of processing, the soluble form derives from the membrane form by proteolytic processing.

Its subcellular location is the secreted. In terms of biological role, cytokine that binds to TNFRSF13B/TACI and to TNFRSF17/BCMA. Plays a role in the regulation of tumor cell growth. May be involved in monocyte/macrophage-mediated immunological processes. The polypeptide is Tumor necrosis factor ligand superfamily member 13 (Tnfsf13) (Mus musculus (Mouse)).